A 341-amino-acid chain; its full sequence is tRNA N6-adenosine threonylcarbamoyltransferase (341 aa).

The Fe cation site is built by histidine 111 and histidine 115. Substrate-binding positions include 134 to 138 (LVSGG), aspartate 167, glycine 180, and asparagine 276. Aspartate 304 is a Fe cation binding site.

The protein belongs to the KAE1 / TsaD family. Requires Fe(2+) as cofactor.

It localises to the cytoplasm. It catalyses the reaction L-threonylcarbamoyladenylate + adenosine(37) in tRNA = N(6)-L-threonylcarbamoyladenosine(37) in tRNA + AMP + H(+). In terms of biological role, required for the formation of a threonylcarbamoyl group on adenosine at position 37 (t(6)A37) in tRNAs that read codons beginning with adenine. Is involved in the transfer of the threonylcarbamoyl moiety of threonylcarbamoyl-AMP (TC-AMP) to the N6 group of A37, together with TsaE and TsaB. TsaD likely plays a direct catalytic role in this reaction. This Pseudomonas fluorescens (strain ATCC BAA-477 / NRRL B-23932 / Pf-5) protein is tRNA N6-adenosine threonylcarbamoyltransferase.